We begin with the raw amino-acid sequence, 208 residues long: Hypoxanthine-guanine phosphoribosyltransferase (208 aa).

GMP is bound by residues Lys63, 122–130, Lys154, and Asp182; that span reads EDIVDSAIT. Residue Asp126 is the Proton acceptor of the active site. Asp182 contributes to the Mg(2+) binding site.

It belongs to the purine/pyrimidine phosphoribosyltransferase family. Mg(2+) is required as a cofactor.

It is found in the cytoplasm. The enzyme catalyses IMP + diphosphate = hypoxanthine + 5-phospho-alpha-D-ribose 1-diphosphate. It carries out the reaction GMP + diphosphate = guanine + 5-phospho-alpha-D-ribose 1-diphosphate. The protein operates within purine metabolism; IMP biosynthesis via salvage pathway; IMP from hypoxanthine: step 1/1. Converts guanine to guanosine monophosphate, and hypoxanthine to inosine monophosphate. Transfers the 5-phosphoribosyl group from 5-phosphoribosylpyrophosphate onto the purine. Plays a central role in the generation of purine nucleotides through the purine salvage pathway. The protein is Hypoxanthine-guanine phosphoribosyltransferase (HGPRT) of Crithidia fasciculata.